Consider the following 309-residue polypeptide: Protoheme IX farnesyltransferase 2 (309 aa).

The next 8 helical transmembrane spans lie at 35 to 55, 59 to 79, 107 to 127, 131 to 151, 159 to 179, 186 to 206, 238 to 258, and 289 to 309; these read FKVV…APDV, MGVQ…AAVI, AHAL…LMLW, LTAI…TSFL, IVIG…SETG, WLLV…LAIA, LLAI…IYLI, and FSII…WLLL.

The protein belongs to the UbiA prenyltransferase family. Protoheme IX farnesyltransferase subfamily.

It is found in the cell inner membrane. It carries out the reaction heme b + (2E,6E)-farnesyl diphosphate + H2O = Fe(II)-heme o + diphosphate. It functions in the pathway porphyrin-containing compound metabolism; heme O biosynthesis; heme O from protoheme: step 1/1. Functionally, converts heme B (protoheme IX) to heme O by substitution of the vinyl group on carbon 2 of heme B porphyrin ring with a hydroxyethyl farnesyl side group. In Pseudoalteromonas translucida (strain TAC 125), this protein is Protoheme IX farnesyltransferase 2.